A 689-amino-acid chain; its full sequence is Pentatricopeptide repeat-containing protein At2g03380, mitochondrial (689 aa).

Residues 1–12 (MLRSITLSPTRR) constitute a mitochondrion transit peptide. PPR repeat units lie at residues 75 to 105 (DISIATKLVSLYGFFGYTKDARLVFDQIPEP), 106 to 140 (DFYLWKVMLRCYCLNKESVEVVKLYDLLMKHGFRY), 141 to 171 (DDIVFSKALKACTELQDLDNGKKIHCQLVKV), 175 to 205 (DNVVLTGLLDMYAKCGEIKSAHKVFNDITLR), 206 to 240 (NVVCWTSMIAGYVKNDLCEEGLVLFNRMRENNVLG), 241 to 275 (NEYTYGTLIMACTKLSALHQGKWFHGCLVKSGIEL), 276 to 306 (SSCLVTSLLDMYVKCGDISNARRVFNEHSHV), 307 to 341 (DLVMWTAMIVGYTHNGSVNEALSLFQKMKGVEIKP), 342 to 372 (NCVTIASVLSGCGLIENLELGRSVHGLSIKV), 376 to 406 (DTNVANALVHMYAKCYQNRDAKYVFEMESEK), 407 to 441 (DIVAWNSIISGFSQNGSIHEALFLFHRMNSESVTP), 442 to 476 (NGVTVASLFSACASLGSLAVGSSLHAYSVKLGFLA), 479 to 509 (SVHVGTALLDFYAKCGDPQSARLIFDTIEEK), 510 to 544 (NTITWSAMIGGYGKQGDTIGSLELFEEMLKKQQKP), 545 to 580 (NESTFTSILSACGHTGMVNEGKKYFSSMYKDYNFTP), and 581 to 611 (STKHYTCMVDMLARAGELEQALDIIEKMPIQ). The segment at 616-689 (CFGAFLHGCG…SKIAGHSTME (74 aa)) is type E motif; degenerate.

It belongs to the PPR family. PCMP-E subfamily.

The protein resides in the mitochondrion. The sequence is that of Pentatricopeptide repeat-containing protein At2g03380, mitochondrial (PCMP-E47) from Arabidopsis thaliana (Mouse-ear cress).